We begin with the raw amino-acid sequence, 388 residues long: Mannitol-1-phosphate 5-dehydrogenase (388 aa).

NAD(+) is bound at residue 5-16 (AVHFGGGNIGRG). Lysine 213 is a catalytic residue.

This sequence belongs to the mannitol dehydrogenase family. Monomer.

It catalyses the reaction D-mannitol 1-phosphate + NAD(+) = beta-D-fructose 6-phosphate + NADH + H(+). In terms of biological role, catalyzes the NAD(H)-dependent interconversion of D-fructose 6-phosphate and D-mannitol 1-phosphate in the mannitol metabolic pathway. This is Mannitol-1-phosphate 5-dehydrogenase from Coccidioides immitis (strain RS) (Valley fever fungus).